Here is a 378-residue protein sequence, read N- to C-terminus: L-lactate dehydrogenase (378 aa).

The region spanning 1–378 (MIISASTDYR…ELSRDSLVKR (378 aa)) is the FMN hydroxy acid dehydrogenase domain. Tyrosine 24 is a substrate binding site. Serine 106 and glutamine 127 together coordinate FMN. Tyrosine 129 serves as a coordination point for substrate. Threonine 155 contributes to the FMN binding site. Substrate is bound at residue arginine 164. Lysine 251 lines the FMN pocket. The active-site Proton acceptor is the histidine 275. A substrate-binding site is contributed by arginine 278. 306-330 (DSGIRTGLDVVRMLALGADCTMLGR) contributes to the FMN binding site.

Belongs to the FMN-dependent alpha-hydroxy acid dehydrogenase family. Requires FMN as cofactor.

It localises to the cell inner membrane. The catalysed reaction is (S)-lactate + A = pyruvate + AH2. In terms of biological role, catalyzes the conversion of L-lactate to pyruvate. Is coupled to the respiratory chain. This chain is L-lactate dehydrogenase, found in Vibrio cholerae serotype O1 (strain ATCC 39315 / El Tor Inaba N16961).